We begin with the raw amino-acid sequence, 430 residues long: Histidine--tRNA ligase (430 aa).

The protein belongs to the class-II aminoacyl-tRNA synthetase family. Homodimer.

Its subcellular location is the cytoplasm. It carries out the reaction tRNA(His) + L-histidine + ATP = L-histidyl-tRNA(His) + AMP + diphosphate + H(+). This is Histidine--tRNA ligase from Parasynechococcus marenigrum (strain WH8102).